A 22-amino-acid chain; its full sequence is Putative ORF3b protein (22 aa).

Functionally, acts as an interferon antagonist when expressed ex vivo. This Severe acute respiratory syndrome coronavirus 2 (2019-nCoV) protein is Putative ORF3b protein.